Reading from the N-terminus, the 259-residue chain is NADPH-dependent reductase BacG (259 aa).

Residues serine 12–isoleucine 15, serine 34–asparagine 36, aspartate 62–methionine 63, isoleucine 90, lysine 113, and glycine 185–arginine 191 each bind NADP(+).

The protein belongs to the short-chain dehydrogenases/reductases (SDR) family. As to quaternary structure, homodimer.

The protein resides in the cytoplasm. It functions in the pathway antibiotic biosynthesis; bacilysin biosynthesis. In terms of biological role, along with the bacABCDEF operon, BacG is involved in the biosynthesis of the nonribosomally synthesized dipeptide antibiotic bacilysin, composed of L-alanine and L-anticapsin. Bacilysin is an irreversible inactivator of the glutaminase domain of glucosamine synthetase. BacG catalyzes the stereoselective reduction of exocyclic-delta(3),delta(5)-dihydro-hydroxyphenylpyruvate (ex-H2HPP), adding a pro-S hydride equivalent to C4 position to yield tetrahydro-hydroxyphenylpyruvate (H4HPP). Although the 3Z,7R-ex-H2HPP isomer is kinetically disfavored by BacB and produced in a smaller quantity than 3E,7R-ex-H2HPP, it is the preferred substrate for the conjugate reduction reaction of BacG. The sequence is that of NADPH-dependent reductase BacG from Bacillus subtilis (strain 168).